A 1195-amino-acid chain; its full sequence is Chromosome partition protein Smc (1195 aa).

33-40 (PNGSGKSN) lines the ATP pocket. Coiled-coil stretches lie at residues 185–241 (GVAQ…RQEQ), 273–348 (DAAT…IQAL), and 380–528 (QYQQ…QETQ). The SMC hinge domain occupies 542–658 (PGVHGLVAQL…FERLDQARRY (117 aa)). Residues 698 to 1043 (GESAEVRAIR…ELLLRIENFT (346 aa)) are a coiled coil.

Belongs to the SMC family. As to quaternary structure, homodimer.

It localises to the cytoplasm. Functionally, required for chromosome condensation and partitioning. The polypeptide is Chromosome partition protein Smc (Synechococcus sp. (strain ATCC 27144 / PCC 6301 / SAUG 1402/1) (Anacystis nidulans)).